A 270-amino-acid polypeptide reads, in one-letter code: uncharacterized protein (270 aa).

The ABC transporter domain occupies 34 to 266 (LIARGLTKSY…PDVRRLYLGD (233 aa)). 66–73 (GPNGAGKT) is a binding site for ATP.

This sequence belongs to the ABC transporter superfamily.

This is an uncharacterized protein from Rhizobium meliloti (strain 1021) (Ensifer meliloti).